The sequence spans 20 residues: Tetracycline resistance leader peptide (20 aa).

The segment at 1 to 20 (MKCNKMNRVQLKEGSVSMTL) is disordered.

The sequence is that of Tetracycline resistance leader peptide (tetL) from Bacillus subtilis (strain 168).